Here is an 80-residue protein sequence, read N- to C-terminus: RNA-binding protein Hfq (80 aa).

Residues 10–70 enclose the Sm domain; that stretch reads DLFLNTVRKQ…ISTIMPGQPM (61 aa).

This sequence belongs to the Hfq family. In terms of assembly, homohexamer.

RNA chaperone that binds small regulatory RNA (sRNAs) and mRNAs to facilitate mRNA translational regulation in response to envelope stress, environmental stress and changes in metabolite concentrations. Also binds with high specificity to tRNAs. This Rhizobium rhizogenes (strain K84 / ATCC BAA-868) (Agrobacterium radiobacter) protein is RNA-binding protein Hfq.